A 107-amino-acid polypeptide reads, in one-letter code: Small ribosomal subunit protein bS16m (107 aa).

Belongs to the bacterial ribosomal protein bS16 family. As to quaternary structure, component of the mitochondrial small ribosomal subunit (mt-SSU). Mature N.crassa 74S mitochondrial ribosomes consist of a small (37S) and a large (54S) subunit. The 37S small subunit contains a 16S ribosomal RNA (16S mt-rRNA) and 32 different proteins. The 54S large subunit contains a 23S rRNA (23S mt-rRNA) and 42 different proteins.

The protein resides in the mitochondrion. Functionally, component of the mitochondrial ribosome (mitoribosome), a dedicated translation machinery responsible for the synthesis of mitochondrial genome-encoded proteins, including at least some of the essential transmembrane subunits of the mitochondrial respiratory chain. The mitoribosomes are attached to the mitochondrial inner membrane and translation products are cotranslationally integrated into the membrane. The sequence is that of Small ribosomal subunit protein bS16m (cyt-21) from Neurospora crassa (strain ATCC 24698 / 74-OR23-1A / CBS 708.71 / DSM 1257 / FGSC 987).